Here is a 362-residue protein sequence, read N- to C-terminus: Phosphoserine aminotransferase (362 aa).

R41 contributes to the L-glutamate binding site. Pyridoxal 5'-phosphate-binding positions include 75–76, F101, T152, D173, and Q196; that span reads GS. N6-(pyridoxal phosphate)lysine is present on K197. 239–240 provides a ligand contact to pyridoxal 5'-phosphate; that stretch reads NT.

This sequence belongs to the class-V pyridoxal-phosphate-dependent aminotransferase family. SerC subfamily. As to quaternary structure, homodimer. It depends on pyridoxal 5'-phosphate as a cofactor.

It is found in the cytoplasm. It carries out the reaction O-phospho-L-serine + 2-oxoglutarate = 3-phosphooxypyruvate + L-glutamate. The enzyme catalyses 4-(phosphooxy)-L-threonine + 2-oxoglutarate = (R)-3-hydroxy-2-oxo-4-phosphooxybutanoate + L-glutamate. It functions in the pathway amino-acid biosynthesis; L-serine biosynthesis; L-serine from 3-phospho-D-glycerate: step 2/3. Functionally, catalyzes the reversible conversion of 3-phosphohydroxypyruvate to phosphoserine and of 3-hydroxy-2-oxo-4-phosphonooxybutanoate to phosphohydroxythreonine. This is Phosphoserine aminotransferase from Leuconostoc mesenteroides subsp. mesenteroides (strain ATCC 8293 / DSM 20343 / BCRC 11652 / CCM 1803 / JCM 6124 / NCDO 523 / NBRC 100496 / NCIMB 8023 / NCTC 12954 / NRRL B-1118 / 37Y).